The following is a 118-amino-acid chain: UPF0102 protein ROP_66030 (118 aa).

This sequence belongs to the UPF0102 family.

In Rhodococcus opacus (strain B4), this protein is UPF0102 protein ROP_66030.